Consider the following 207-residue polypeptide: A-type ATP synthase subunit E (207 aa).

Belongs to the V-ATPase E subunit family. In terms of assembly, has multiple subunits with at least A(3), B(3), C, D, E, F, H, I and proteolipid K(x).

It is found in the cell membrane. Its function is as follows. Component of the A-type ATP synthase that produces ATP from ADP in the presence of a proton gradient across the membrane. The sequence is that of A-type ATP synthase subunit E from Hyperthermus butylicus (strain DSM 5456 / JCM 9403 / PLM1-5).